A 588-amino-acid polypeptide reads, in one-letter code: Transcription factor tau 60 kDa subunit (588 aa).

Positions 399–588 (LPKLPENFSM…VYCGTTLEVM (190 aa)) are sufficient for SPT15-binding.

As to quaternary structure, heterodimer with TFC6. Component of the TFIIIC complex composed of TFC1, TFC3, TFC4, TFC6, TFC7 and TFC8. The subunits are organized in two globular domains, tauA and tauB, connected by a proteolysis-sensitive and flexible linker. Interacts with SPT15 and directly with TFC6.

The protein localises to the nucleus. Its function is as follows. TFIIIC mediates tRNA and 5S RNA gene activation by binding to intragenic promoter elements. Upstream of the transcription start site, TFIIIC assembles the initiation complex TFIIIB-TFIIIC-tDNA, which is sufficient for RNA polymerase III recruitment and function. Part of the tauB domain of TFIIIC that binds boxB DNA promoter sites of tRNA and similar genes. Plays a role in TFIIB assembly through its interaction with SPT15/TBP. Essential for cell viability. The polypeptide is Transcription factor tau 60 kDa subunit (TFC8) (Saccharomyces cerevisiae (strain ATCC 204508 / S288c) (Baker's yeast)).